The following is a 116-amino-acid chain: Large ribosomal subunit protein bL17 (116 aa).

This sequence belongs to the bacterial ribosomal protein bL17 family. Part of the 50S ribosomal subunit. Contacts protein L32.

The polypeptide is Large ribosomal subunit protein bL17 (Crocosphaera subtropica (strain ATCC 51142 / BH68) (Cyanothece sp. (strain ATCC 51142))).